The sequence spans 588 residues: 2-succinyl-5-enolpyruvyl-6-hydroxy-3-cyclohexene-1-carboxylate synthase (588 aa).

Residues 1 to 22 (MTTTGSLPAQPSSTSPRTGNPS) form a disordered region.

This sequence belongs to the TPP enzyme family. MenD subfamily. Homodimer. The cofactor is Mg(2+). Requires Mn(2+) as cofactor. Thiamine diphosphate serves as cofactor.

It carries out the reaction isochorismate + 2-oxoglutarate + H(+) = 5-enolpyruvoyl-6-hydroxy-2-succinyl-cyclohex-3-ene-1-carboxylate + CO2. Its pathway is quinol/quinone metabolism; 1,4-dihydroxy-2-naphthoate biosynthesis; 1,4-dihydroxy-2-naphthoate from chorismate: step 2/7. It functions in the pathway quinol/quinone metabolism; menaquinone biosynthesis. Functionally, catalyzes the thiamine diphosphate-dependent decarboxylation of 2-oxoglutarate and the subsequent addition of the resulting succinic semialdehyde-thiamine pyrophosphate anion to isochorismate to yield 2-succinyl-5-enolpyruvyl-6-hydroxy-3-cyclohexene-1-carboxylate (SEPHCHC). In Clavibacter michiganensis subsp. michiganensis (strain NCPPB 382), this protein is 2-succinyl-5-enolpyruvyl-6-hydroxy-3-cyclohexene-1-carboxylate synthase.